Here is a 642-residue protein sequence, read N- to C-terminus: Serine/threonine-protein kinase pakA (642 aa).

Composition is skewed to polar residues over residues 1–12 (MSLKKQQQQSDF) and 38–48 (LRQSASFTALN). Residues 1–82 (MSLKKQQQQS…GFGTKPRRKN (82 aa)) are disordered. The CRIB domain maps to 100–113 (ISAPENPVHVTHVG). Disordered stretches follow at residues 180–276 (GEYP…PIPE) and 317–338 (QLDR…RTRQ). 2 stretches are compositionally biased toward low complexity: residues 217–227 (SQSSPVPVLSS) and 254–266 (VVSN…RPAN). Positions 361–612 (YYNLNKIGQG…AHDLLKHPFM (252 aa)) constitute a Protein kinase domain. ATP-binding positions include 367 to 375 (IGQGASGGV) and Lys-390. Asp-480 serves as the catalytic Proton acceptor.

It belongs to the protein kinase superfamily. STE Ser/Thr protein kinase family. STE20 subfamily.

The protein localises to the cytoplasm. It localises to the nucleus. It catalyses the reaction L-seryl-[protein] + ATP = O-phospho-L-seryl-[protein] + ADP + H(+). It carries out the reaction L-threonyl-[protein] + ATP = O-phospho-L-threonyl-[protein] + ADP + H(+). In terms of biological role, MAP4K component of the MAPK pathway required for the mating pheromone response and the regulation of cell polarity and cell cycle. This chain is Serine/threonine-protein kinase pakA (pakA), found in Talaromyces marneffei (Penicillium marneffei).